The chain runs to 396 residues: Tryptophan synthase beta chain (396 aa).

Lys-86 is subject to N6-(pyridoxal phosphate)lysine.

The protein belongs to the TrpB family. As to quaternary structure, tetramer of two alpha and two beta chains. Pyridoxal 5'-phosphate serves as cofactor.

The enzyme catalyses (1S,2R)-1-C-(indol-3-yl)glycerol 3-phosphate + L-serine = D-glyceraldehyde 3-phosphate + L-tryptophan + H2O. The protein operates within amino-acid biosynthesis; L-tryptophan biosynthesis; L-tryptophan from chorismate: step 5/5. Its function is as follows. The beta subunit is responsible for the synthesis of L-tryptophan from indole and L-serine. The protein is Tryptophan synthase beta chain of Francisella tularensis subsp. tularensis (strain FSC 198).